Reading from the N-terminus, the 208-residue chain is uncharacterized protein (208 aa).

This is an uncharacterized protein from Methanocaldococcus jannaschii (strain ATCC 43067 / DSM 2661 / JAL-1 / JCM 10045 / NBRC 100440) (Methanococcus jannaschii).